A 131-amino-acid polypeptide reads, in one-letter code: MSWQAYVDDHLMCEIEGNHLTSAAIIGQDGSVWAKSENFPQLKPEEITGILNDFNEPGTLAPTGLYIGGSKYMVIQGEPGAVIRGKKGPGGVTVKKTALALVIGIYDEPMTPGQCNMIVERLGDYLIEQGL.

It belongs to the profilin family. As to quaternary structure, occurs in many kinds of cells as a complex with monomeric actin in a 1:1 ratio.

It localises to the cytoplasm. It is found in the cytoskeleton. Functionally, binds to actin and affects the structure of the cytoskeleton. At high concentrations, profilin prevents the polymerization of actin, whereas it enhances it at low concentrations. Has a high affinity for poly-proline. This chain is Profilin, found in Citrullus lanatus (Watermelon).